Consider the following 176-residue polypeptide: Protein singles bar (176 aa).

The next 4 helical transmembrane spans lie at 13–35 (LGIR…LSRI), 71–91 (FLAT…CYAF), 111–131 (LASC…VVWL), and 140–160 (GFWA…AGIL). The MARVEL domain occupies 30 to 173 (FVLSRIGLLK…DAYLAFRHFR (144 aa)).

Its subcellular location is the membrane. Functionally, essential for myoblast fusion in developing embryos and pupae, and consequently is essential for muscle formation in adults. Required for progression past the pre-fusion complex stage of myoblast fusion. The polypeptide is Protein singles bar (Drosophila melanogaster (Fruit fly)).